A 119-amino-acid polypeptide reads, in one-letter code: Large ribosomal subunit protein uL18 (119 aa).

A disordered region spans residues M1–S23. The span at T10–G20 shows a compositional bias: basic residues.

It belongs to the universal ribosomal protein uL18 family. In terms of assembly, part of the 50S ribosomal subunit; part of the 5S rRNA/L5/L18/L25 subcomplex. Contacts the 5S and 23S rRNAs.

In terms of biological role, this is one of the proteins that bind and probably mediate the attachment of the 5S RNA into the large ribosomal subunit, where it forms part of the central protuberance. The protein is Large ribosomal subunit protein uL18 of Lacticaseibacillus casei (strain BL23) (Lactobacillus casei).